Here is a 550-residue protein sequence, read N- to C-terminus: Glutamyl-tRNA(Gln) amidotransferase subunit A, mitochondrial (550 aa).

Residues Lys-79 and Ser-171 each act as charge relay system in the active site. Catalysis depends on Ser-195, which acts as the Acyl-ester intermediate. The disordered stretch occupies residues Glu-371–Asn-390.

This sequence belongs to the amidase family. GatA subfamily. As to quaternary structure, subunit of the heterotrimeric GatCAB amidotransferase (AdT) complex, composed of A, B and C subunits.

It localises to the mitochondrion. It carries out the reaction L-glutamyl-tRNA(Gln) + L-glutamine + ATP + H2O = L-glutaminyl-tRNA(Gln) + L-glutamate + ADP + phosphate + H(+). Allows the formation of correctly charged Gln-tRNA(Gln) through the transamidation of misacylated Glu-tRNA(Gln) in the mitochondria. The reaction takes place in the presence of glutamine and ATP through an activated gamma-phospho-Glu-tRNA(Gln). The protein is Glutamyl-tRNA(Gln) amidotransferase subunit A, mitochondrial of Dictyostelium discoideum (Social amoeba).